A 369-amino-acid chain; its full sequence is Chaperone protein DnaJ (369 aa).

Residues Asp-7–Gly-73 enclose the J domain. A CR-type zinc finger spans residues Gly-143–Lys-225. 8 residues coordinate Zn(2+): Cys-156, Cys-159, Cys-173, Cys-176, Cys-199, Cys-202, Cys-213, and Cys-216. 4 CXXCXGXG motif repeats span residues Cys-156–Gly-163, Cys-173–Gly-180, Cys-199–Gly-206, and Cys-213–Gly-220.

Belongs to the DnaJ family. As to quaternary structure, homodimer. Zn(2+) serves as cofactor.

Its subcellular location is the cytoplasm. Its function is as follows. Participates actively in the response to hyperosmotic and heat shock by preventing the aggregation of stress-denatured proteins and by disaggregating proteins, also in an autonomous, DnaK-independent fashion. Unfolded proteins bind initially to DnaJ; upon interaction with the DnaJ-bound protein, DnaK hydrolyzes its bound ATP, resulting in the formation of a stable complex. GrpE releases ADP from DnaK; ATP binding to DnaK triggers the release of the substrate protein, thus completing the reaction cycle. Several rounds of ATP-dependent interactions between DnaJ, DnaK and GrpE are required for fully efficient folding. Also involved, together with DnaK and GrpE, in the DNA replication of plasmids through activation of initiation proteins. The chain is Chaperone protein DnaJ from Thermotoga petrophila (strain ATCC BAA-488 / DSM 13995 / JCM 10881 / RKU-1).